The primary structure comprises 359 residues: DNA polymerase IV (359 aa).

A UmuC domain is found at 7–188 (IIHIDMDAFY…LPIGKFFGVG (182 aa)). 2 residues coordinate Mg(2+): Asp-11 and Asp-106. Residue Glu-107 is part of the active site.

Belongs to the DNA polymerase type-Y family. Monomer. Mg(2+) serves as cofactor.

The protein localises to the cytoplasm. The catalysed reaction is DNA(n) + a 2'-deoxyribonucleoside 5'-triphosphate = DNA(n+1) + diphosphate. Poorly processive, error-prone DNA polymerase involved in untargeted mutagenesis. Copies undamaged DNA at stalled replication forks, which arise in vivo from mismatched or misaligned primer ends. These misaligned primers can be extended by PolIV. Exhibits no 3'-5' exonuclease (proofreading) activity. May be involved in translesional synthesis, in conjunction with the beta clamp from PolIII. The protein is DNA polymerase IV of Clostridium perfringens (strain SM101 / Type A).